A 221-amino-acid chain; its full sequence is NEP1-interacting protein-like 1 (221 aa).

Helical transmembrane passes span 35-55 (LFTF…GALI), 69-89 (VGAI…LLLW), and 95-115 (GIGC…GRLV). Residues 176–218 (CSVCLQDFQVGETVRSLPHCHHMFHLPCIDKWLRRHASCPLCR) form an RING-type; atypical zinc finger.

It belongs to the RING-type zinc finger family. NIP subfamily.

The protein localises to the membrane. Functionally, may be involved in the early steps of the plant defense signaling pathway. This is NEP1-interacting protein-like 1 (ATL27) from Arabidopsis thaliana (Mouse-ear cress).